Here is a 313-residue protein sequence, read N- to C-terminus: NADH-ubiquinone oxidoreductase chain 1 (313 aa).

Helical transmembrane passes span 7–27 (LIGSLLLVICVMVGVAFLTLL), 73–93 (IFYYFSPIFSLFLSLLIWMSM), 104–124 (LGVLFFLCITSLGVYTVMVAG), 150–170 (LALILLSFIFLIGNYNFLNFF), 175–195 (YMWFIVFCFPLGLVWFASCLA), 226–246 (LIFLAEYSSILFMSMLFSVIF), 250–270 (DIYSILFFFKLTIISFFFIWV), and 293–313 (MSLNYLFFFIGVKIFILSMLF).

Belongs to the complex I subunit 1 family.

The protein localises to the mitochondrion inner membrane. The catalysed reaction is a ubiquinone + NADH + 5 H(+)(in) = a ubiquinol + NAD(+) + 4 H(+)(out). Its function is as follows. Core subunit of the mitochondrial membrane respiratory chain NADH dehydrogenase (Complex I) that is believed to belong to the minimal assembly required for catalysis. Complex I functions in the transfer of electrons from NADH to the respiratory chain. The immediate electron acceptor for the enzyme is believed to be ubiquinone. This chain is NADH-ubiquinone oxidoreductase chain 1, found in Aedes aegypti (Yellowfever mosquito).